The chain runs to 468 residues: Citrate synthase, mitochondrial (468 aa).

Residues 1–30 constitute a mitochondrion transit peptide; sequence MSLISAGRVCARILGAKNSPCALIAARQAS. Catalysis depends on residues His303 and His349. Arg358 is an oxaloacetate binding site. The active site involves Asp404. Oxaloacetate-binding residues include Arg430 and Arg450.

It belongs to the citrate synthase family. In terms of assembly, homodimer.

It is found in the mitochondrion matrix. The enzyme catalyses oxaloacetate + acetyl-CoA + H2O = citrate + CoA + H(+). It participates in carbohydrate metabolism; tricarboxylic acid cycle; isocitrate from oxaloacetate: step 1/2. Functionally, key enzyme of the Krebs tricarboxylic acid cycle which catalyzes the synthesis of citrate from acetyl coenzyme A and oxaloacetate. This Xenopus laevis (African clawed frog) protein is Citrate synthase, mitochondrial (cs).